Here is a 435-residue protein sequence, read N- to C-terminus: Methylenetetrahydrofolate--tRNA-(uracil-5-)-methyltransferase TrmFO (435 aa).

9–14 (GAGLAG) is a binding site for FAD.

This sequence belongs to the MnmG family. TrmFO subfamily. FAD serves as cofactor.

It is found in the cytoplasm. It carries out the reaction uridine(54) in tRNA + (6R)-5,10-methylene-5,6,7,8-tetrahydrofolate + NADH + H(+) = 5-methyluridine(54) in tRNA + (6S)-5,6,7,8-tetrahydrofolate + NAD(+). It catalyses the reaction uridine(54) in tRNA + (6R)-5,10-methylene-5,6,7,8-tetrahydrofolate + NADPH + H(+) = 5-methyluridine(54) in tRNA + (6S)-5,6,7,8-tetrahydrofolate + NADP(+). Functionally, catalyzes the folate-dependent formation of 5-methyl-uridine at position 54 (M-5-U54) in all tRNAs. In Enterococcus faecalis (strain ATCC 700802 / V583), this protein is Methylenetetrahydrofolate--tRNA-(uracil-5-)-methyltransferase TrmFO.